Here is a 654-residue protein sequence, read N- to C-terminus: Protein fem-1 homolog A-like (654 aa).

ANK repeat units follow at residues 2–31 (DLHT…REEL), 40–70 (GGGT…SVEA), 82–111 (EGAP…SVNR), 115–145 (TNST…DLEV), 149–178 (HGHT…QVNR), 182–211 (KGNT…RMER), and 214–243 (YGMT…SHEQ). Residue Ser108 is modified to Phosphoserine. Residues 241 to 265 (HEQLSGTELPGEGSSQMAGNHCSTP) are disordered. The segment covering 253–263 (GSSQMAGNHCS) has biased composition (polar residues). TPR repeat units lie at residues 283–317 (VEAL…RHQG) and 375–408 (SYYI…QQNN). 2 ANK repeats span residues 519-561 (NGFT…DPDS) and 565-594 (DNNS…HMDA). Ser608 carries the post-translational modification Phosphoserine.

The protein belongs to the fem-1 family. Component of a CRL2 E3 ubiquitin-protein ligase complex, also named ECS (Elongin BC-CUL2/5-SOCS-box protein) complex, composed of CUL2, Elongin BC (ELOB and ELOC), RBX1 and substrate-specific adapter FEM1A.

The protein resides in the mitochondrion. It localises to the cytoplasm. Its pathway is protein modification; protein ubiquitination. Substrate-recognition component of a Cul2-RING (CRL2) E3 ubiquitin-protein ligase complex of the DesCEND (destruction via C-end degrons) pathway, which recognizes a C-degron located at the extreme C terminus of target proteins, leading to their ubiquitination and degradation. The C-degron recognized by the DesCEND pathway is usually a motif of less than ten residues and can be present in full-length proteins, truncated proteins or proteolytically cleaved forms. The CRL2(FEM1A) complex specifically recognizes proteins with an arginine at the C-terminus: recognizes and binds proteins ending with -Lys/Arg-Xaa-Arg and -Lys/Arg-Xaa-Xaa-Arg C-degrons, such as SIL1 or OR51B2, leading to their ubiquitination and degradation. The protein is Protein fem-1 homolog A-like of Mus musculus (Mouse).